The sequence spans 465 residues: ATP-dependent protease ATPase subunit HslU (465 aa).

ATP-binding positions include Val19, 61–66 (GVGKTE), Asp277, Glu343, and Arg415.

The protein belongs to the ClpX chaperone family. HslU subfamily. In terms of assembly, a double ring-shaped homohexamer of HslV is capped on each side by a ring-shaped HslU homohexamer. The assembly of the HslU/HslV complex is dependent on binding of ATP.

The protein resides in the cytoplasm. ATPase subunit of a proteasome-like degradation complex; this subunit has chaperone activity. The binding of ATP and its subsequent hydrolysis by HslU are essential for unfolding of protein substrates subsequently hydrolyzed by HslV. HslU recognizes the N-terminal part of its protein substrates and unfolds these before they are guided to HslV for hydrolysis. In Geobacillus sp. (strain WCH70), this protein is ATP-dependent protease ATPase subunit HslU.